Here is a 44-residue protein sequence, read N- to C-terminus: Cytochrome b559 subunit beta (44 aa).

Residues 19–35 (WLAIHGIAVPTIFFLGA) traverse the membrane as a helical segment. Residue histidine 23 coordinates heme.

This sequence belongs to the PsbE/PsbF family. In terms of assembly, heterodimer of an alpha subunit and a beta subunit. PSII is composed of 1 copy each of membrane proteins PsbA, PsbB, PsbC, PsbD, PsbE, PsbF, PsbH, PsbI, PsbJ, PsbK, PsbL, PsbM, PsbT, PsbX, PsbY, PsbZ, Psb30/Ycf12, at least 3 peripheral proteins of the oxygen-evolving complex and a large number of cofactors. It forms dimeric complexes. Heme b is required as a cofactor.

It localises to the plastid. It is found in the chloroplast thylakoid membrane. In terms of biological role, this b-type cytochrome is tightly associated with the reaction center of photosystem II (PSII). PSII is a light-driven water:plastoquinone oxidoreductase that uses light energy to abstract electrons from H(2)O, generating O(2) and a proton gradient subsequently used for ATP formation. It consists of a core antenna complex that captures photons, and an electron transfer chain that converts photonic excitation into a charge separation. In Chlamydomonas reinhardtii (Chlamydomonas smithii), this protein is Cytochrome b559 subunit beta.